The following is a 292-amino-acid chain: Transcription factor-like protein DPA (292 aa).

The disordered stretch occupies residues M1–T25. The DNA-binding element occupies G51–P135. The short motif at N101–P135 is the DEF box element. The stretch at L163 to V184 forms a coiled coil. The tract at residues Q246–G280 is disordered. Low complexity predominate over residues S252–G280.

This sequence belongs to the E2F/DP family. In terms of assembly, heterodimer with E2F. Interacts preferentially with E2FA and E2FB, but also with E2FC. As to expression, strongly expressed in the actively dividing tissues of the shoot apical meristem, young leaf primordia, the vascular tissues of the maturing leaf primordia and axillary buds.

The protein localises to the cytoplasm. It is found in the nucleus. Functionally, involved in the regulation of the G1/S transition. Increases the DNA binding and the transactivation activities of E2F proteins after heterodimerization. The complex DPA/E2FA promotes cell division and acts as a regulator of the endocycle. Positively regulates the activity of S phase-specific genes. This is Transcription factor-like protein DPA (DPA) from Arabidopsis thaliana (Mouse-ear cress).